A 121-amino-acid polypeptide reads, in one-letter code: Large ribosomal subunit protein uL14 (121 aa).

This sequence belongs to the universal ribosomal protein uL14 family. Part of the 50S ribosomal subunit. Forms a cluster with proteins L3 and L19. In the 70S ribosome, L14 and L19 interact and together make contacts with the 16S rRNA in bridges B5 and B8.

Functionally, binds to 23S rRNA. Forms part of two intersubunit bridges in the 70S ribosome. This is Large ribosomal subunit protein uL14 from Opitutus terrae (strain DSM 11246 / JCM 15787 / PB90-1).